The chain runs to 464 residues: MKNAAELWHNVLSVIEEEQRTPKASYDMWLKSTEGVTLNGTTLIVSAPAAFTVTWLERQYLSLLEDTVEEVTGSRLDIQFIEEGQAKHMLDRQNEEVEVMEVAPAKTKAQKTPKSSDELVMSELGQLNEKYTFDTFVIGSGNRFAHAASLAVAEAPAKAYNPLFIYGGVGLGKTHLMHAIGQYVQDQKLGTKIAYVSSEQFTNDFINSIRDNKTVQFRNKYRNIDVLLIDDIQFLAGKEQTQEEFFHTFNALHNDQKQIIISSDRPPKEIPTLEDRLRSRFEWGLITDITPPDLETRIAILRKKANAEQLDVSNEVMLYIASQIDTNIRELEGALTRVIAYANLVGRTIDPNVAAEALHNIMPASEPRKVTIRDIQESVSKHFNLPFDDLKAKKRTKSIAFPRQIAMYLSREMTESSLPKIGEEFGGRDHTTVIHAHEKISTLVKSDGETGKVIEQIKHELKHS.

The tract at residues 1 to 82 (MKNAAELWHN…GSRLDIQFIE (82 aa)) is domain I, interacts with DnaA modulators. A domain II region spans residues 82-125 (EEGQAKHMLDRQNEEVEVMEVAPAKTKAQKTPKSSDELVMSELG). Residues 126-342 (QLNEKYTFDT…GALTRVIAYA (217 aa)) form a domain III, AAA+ region region. Gly170, Gly172, Lys173, and Thr174 together coordinate ATP. The segment at 343–464 (NLVGRTIDPN…EQIKHELKHS (122 aa)) is domain IV, binds dsDNA.

It belongs to the DnaA family. In terms of assembly, oligomerizes as a right-handed, spiral filament on DNA at oriC.

The protein resides in the cytoplasm. Its function is as follows. Plays an essential role in the initiation and regulation of chromosomal replication. ATP-DnaA binds to the origin of replication (oriC) to initiate formation of the DNA replication initiation complex once per cell cycle. Binds the DnaA box (a 9 base pair repeat at the origin) and separates the double-stranded (ds)DNA. Forms a right-handed helical filament on oriC DNA; dsDNA binds to the exterior of the filament while single-stranded (ss)DNA is stabiized in the filament's interior. The ATP-DnaA-oriC complex binds and stabilizes one strand of the AT-rich DNA unwinding element (DUE), permitting loading of DNA polymerase. After initiation quickly degrades to an ADP-DnaA complex that is not apt for DNA replication. Binds acidic phospholipids. The chain is Chromosomal replication initiator protein DnaA from Exiguobacterium sibiricum (strain DSM 17290 / CCUG 55495 / CIP 109462 / JCM 13490 / 255-15).